The sequence spans 510 residues: Maturase K (510 aa).

The protein belongs to the intron maturase 2 family. MatK subfamily.

It localises to the plastid. It is found in the chloroplast. Its function is as follows. Usually encoded in the trnK tRNA gene intron. Probably assists in splicing its own and other chloroplast group II introns. The sequence is that of Maturase K from Populus alba (White poplar).